A 267-amino-acid chain; its full sequence is 4-hydroxy-tetrahydrodipicolinate reductase (267 aa).

NAD(+) is bound by residues 12–17 (GPRGRM), 100–102 (GTT), and 126–129 (APNF). Catalysis depends on histidine 156, which acts as the Proton donor/acceptor. Histidine 157 contributes to the (S)-2,3,4,5-tetrahydrodipicolinate binding site. The active-site Proton donor is lysine 160. A (S)-2,3,4,5-tetrahydrodipicolinate-binding site is contributed by 166–167 (GT).

This sequence belongs to the DapB family.

The protein resides in the cytoplasm. It catalyses the reaction (S)-2,3,4,5-tetrahydrodipicolinate + NAD(+) + H2O = (2S,4S)-4-hydroxy-2,3,4,5-tetrahydrodipicolinate + NADH + H(+). The enzyme catalyses (S)-2,3,4,5-tetrahydrodipicolinate + NADP(+) + H2O = (2S,4S)-4-hydroxy-2,3,4,5-tetrahydrodipicolinate + NADPH + H(+). It participates in amino-acid biosynthesis; L-lysine biosynthesis via DAP pathway; (S)-tetrahydrodipicolinate from L-aspartate: step 4/4. Its function is as follows. Catalyzes the conversion of 4-hydroxy-tetrahydrodipicolinate (HTPA) to tetrahydrodipicolinate. The chain is 4-hydroxy-tetrahydrodipicolinate reductase from Bacillus velezensis (strain DSM 23117 / BGSC 10A6 / LMG 26770 / FZB42) (Bacillus amyloliquefaciens subsp. plantarum).